We begin with the raw amino-acid sequence, 132 residues long: MSYLGKVYSLVKQENFDGFLKSAGLSDDKIQALVSDKPTQKMEANGDSYSITSTGIGGERTVSFKSGVEFDDVIGAGESVKSMYTVDGNVVTHVVKGDAGVATFKKEYNGDDLVVTITSSNWDGVARRYYKA.

At S2 the chain carries N-acetylserine. Hexadecanoate is bound by residues Q40 and 128–130; that span reads RYY.

Belongs to the calycin superfamily. Fatty-acid binding protein (FABP) family. In terms of assembly, monomer. In terms of tissue distribution, midgut.

It localises to the cytoplasm. Binds fatty acids in a 1:1 molar ratio. The chain is Fatty acid-binding protein 2 (MFB2) from Manduca sexta (Tobacco hawkmoth).